Consider the following 366-residue polypeptide: tRNA (guanine(26)-N(2))-dimethyltransferase (366 aa).

Residues 1–28 (MEVSEGSVTVEVPEERHGASEGSGEGVF) form a disordered region. The Trm1 methyltransferase domain occupies 1 to 365 (MEVSEGSVTV…ADVADIRNAV (365 aa)). S-adenosyl-L-methionine contacts are provided by R37, R64, and D79. Residues C234, C237, C254, and C257 each coordinate Zn(2+).

Belongs to the class I-like SAM-binding methyltransferase superfamily. Trm1 family.

It carries out the reaction guanosine(26) in tRNA + 2 S-adenosyl-L-methionine = N(2)-dimethylguanosine(26) in tRNA + 2 S-adenosyl-L-homocysteine + 2 H(+). Functionally, dimethylates a single guanine residue at position 26 of a number of tRNAs using S-adenosyl-L-methionine as donor of the methyl groups. In Natronomonas pharaonis (strain ATCC 35678 / DSM 2160 / CIP 103997 / JCM 8858 / NBRC 14720 / NCIMB 2260 / Gabara) (Halobacterium pharaonis), this protein is tRNA (guanine(26)-N(2))-dimethyltransferase.